A 1485-amino-acid chain; its full sequence is Chromosome partition protein MukB (1485 aa).

Position 34–41 (34–41 (GGNGAGKS)) interacts with ATP. 2 coiled-coil regions span residues 337 to 480 (LNLV…QAYQ) and 509 to 605 (QHLA…PVWL). Positions 666–783 (PSGAEDARLI…EVPLFGRAAR (118 aa)) are flexible hinge. Coiled coils occupy residues 835-915 (EAEI…IQQH) and 977-1116 (GMLT…AKAG).

It belongs to the SMC family. MukB subfamily. In terms of assembly, homodimerization via its hinge domain. Binds to DNA via its C-terminal region. Interacts, and probably forms a ternary complex, with MukE and MukF via its C-terminal region. The complex formation is stimulated by calcium or magnesium. Interacts with tubulin-related protein FtsZ.

The protein localises to the cytoplasm. It is found in the nucleoid. Functionally, plays a central role in chromosome condensation, segregation and cell cycle progression. Functions as a homodimer, which is essential for chromosome partition. Involved in negative DNA supercoiling in vivo, and by this means organize and compact chromosomes. May achieve or facilitate chromosome segregation by condensation DNA from both sides of a centrally located replisome during cell division. The polypeptide is Chromosome partition protein MukB (Yersinia pseudotuberculosis serotype O:3 (strain YPIII)).